A 447-amino-acid chain; its full sequence is Phosphoglucosamine mutase (447 aa).

The active-site Phosphoserine intermediate is Ser103. Residues Ser103, Asp242, Asp244, and Asp246 each contribute to the Mg(2+) site. Phosphoserine is present on Ser103.

Belongs to the phosphohexose mutase family. The cofactor is Mg(2+). Activated by phosphorylation.

It carries out the reaction alpha-D-glucosamine 1-phosphate = D-glucosamine 6-phosphate. In terms of biological role, catalyzes the conversion of glucosamine-6-phosphate to glucosamine-1-phosphate. The protein is Phosphoglucosamine mutase of Dinoroseobacter shibae (strain DSM 16493 / NCIMB 14021 / DFL 12).